Consider the following 119-residue polypeptide: MKGKGKFNARTRRHLRVRKRISGTTSVPRLVVNRSARHMFVQVVDDTQSRTIAYASTMEADVRALEGDKTAKAKRVGELVAERAKAAGIEAAVFDRAGNKYHGRVAAVADGAREGGLQL.

This sequence belongs to the universal ribosomal protein uL18 family. In terms of assembly, part of the 50S ribosomal subunit; part of the 5S rRNA/L5/L18/L25 subcomplex. Contacts the 5S and 23S rRNAs.

This is one of the proteins that bind and probably mediate the attachment of the 5S RNA into the large ribosomal subunit, where it forms part of the central protuberance. The chain is Large ribosomal subunit protein uL18 from Micrococcus luteus (Micrococcus lysodeikticus).